Reading from the N-terminus, the 204-residue chain is GTP cyclohydrolase-2 (204 aa).

49–53 (RIHSE) contacts GTP. 3 residues coordinate Zn(2+): cysteine 54, cysteine 65, and cysteine 67. Residues glutamine 70, 92 to 94 (EGR), and threonine 114 contribute to the GTP site. Aspartate 126 serves as the catalytic Proton acceptor. Arginine 128 functions as the Nucleophile in the catalytic mechanism. GTP contacts are provided by threonine 149 and lysine 154.

It belongs to the GTP cyclohydrolase II family. The cofactor is Zn(2+).

It catalyses the reaction GTP + 4 H2O = 2,5-diamino-6-hydroxy-4-(5-phosphoribosylamino)-pyrimidine + formate + 2 phosphate + 3 H(+). It functions in the pathway cofactor biosynthesis; riboflavin biosynthesis; 5-amino-6-(D-ribitylamino)uracil from GTP: step 1/4. In terms of biological role, catalyzes the conversion of GTP to 2,5-diamino-6-ribosylamino-4(3H)-pyrimidinone 5'-phosphate (DARP), formate and pyrophosphate. This is GTP cyclohydrolase-2 from Shewanella baltica (strain OS223).